The primary structure comprises 132 residues: Interleukin-13 (132 aa).

A signal peptide spans 1 to 18; sequence MALLLTAVIVLICFGGLT. N-linked (GlcNAc...) asparagine glycans are attached at residues Asn38, Asn49, Asn57, and Asn75. Disulfide bonds link Cys48–Cys76 and Cys64–Cys90.

Belongs to the IL-4/IL-13 family. Interacts with IL13RA2.

It is found in the secreted. Functionally, cytokine that plays important roles in allergic inflammation and immune response to parasite infection. Synergizes with IL2 in regulating interferon-gamma synthesis. Stimulates B-cell proliferation, and activation of eosinophils, basophils, and mast cells. Plays an important role in controlling IL33 activity by modulating the production of transmembrane and soluble forms of interleukin-1 receptor-like 1/IL1RL1. Displays the capacity to antagonize Th1-driven proinflammatory immune response and downregulates synthesis of many proinflammatory cytokines including IL1, IL6, IL10, IL12 and TNF-alpha through a mechanism that partially involves suppression of NF-kappa-B. Also functions on nonhematopoietic cells, including endothelial cells where it induces vascular cell adhesion protein 1/VCAM1, which is important in the recruitment of eosinophils. Exerts its biological effects through its receptors which comprises the IL4R chain and the IL13RA1 chain, to activate JAK1 and TYK2, leading to the activation of STAT6. Aside from IL13RA1, another receptor IL13RA2 acts as a high affinity decoy for IL13 and mediates internalization and depletion of extracellular IL13. In Bos taurus (Bovine), this protein is Interleukin-13 (IL13).